We begin with the raw amino-acid sequence, 333 residues long: Cytochrome f (333 aa).

An N-terminal signal peptide occupies residues 1-37 (MRNSCKKARRTRPLKATIQALLVAIATMTFFFTSDIA). The Cytoplasmic segment spans residues 38–298 (LPQSAAAYPF…TEIVLQDPNR (261 aa)). Tyr45, Cys66, Cys69, and His70 together coordinate heme. The chain crosses the membrane as a helical span at residues 299–319 (VKWMIAFICLVMLAQLMLILK). Topologically, residues 320–333 (KKQVEKVQAAEMNF) are lumenal, thylakoid.

This sequence belongs to the cytochrome f family. In terms of assembly, the 4 large subunits of the cytochrome b6-f complex are cytochrome b6, subunit IV (17 kDa polypeptide, PetD), cytochrome f and the Rieske protein, while the 4 small subunits are PetG, PetL, PetM and PetN. The complex functions as a dimer. Requires heme as cofactor.

Its subcellular location is the cellular thylakoid membrane. In terms of biological role, component of the cytochrome b6-f complex, which mediates electron transfer between photosystem II (PSII) and photosystem I (PSI), cyclic electron flow around PSI, and state transitions. This Mastigocladus laminosus (Fischerella sp.) protein is Cytochrome f (petA).